The chain runs to 279 residues: Tumor necrosis factor ligand superfamily member 6 (279 aa).

The Cytoplasmic portion of the chain corresponds to 1–78; the sequence is MQQPMNYPCP…PLKKKDHNTN (78 aa). The segment at 30–70 is disordered; sequence FPCPSCGPRGPDQRRPPPPPPPVSPLPPPSQPLPLPPLTPL. Residues 45 to 68 show a composition bias toward pro residues; that stretch reads PPPPPPPVSPLPPPSQPLPLPPLT. The helical; Signal-anchor for type II membrane protein transmembrane segment at 79–100 threads the bilayer; the sequence is LWLPVVFFMVLVALVGMGLGMY. Topologically, residues 101-279 are extracellular; the sequence is QLFHLQKELA…SKTFFGLYKL (179 aa). N-linked (GlcNAc...) asparagine glycosylation occurs at asparagine 117. Residues 126–135 are compositionally biased toward polar residues; sequence EKQIANPSTP. Residues 126 to 150 form a disordered region; that stretch reads EKQIANPSTPSEKKEPRSVAHLTGN. Positions 143–279 constitute a THD domain; that stretch reads SVAHLTGNPH…SKTFFGLYKL (137 aa). N-linked (GlcNAc...) asparagine glycosylation is present at asparagine 182. Cysteine 200 and cysteine 231 are oxidised to a cystine. Residues asparagine 248 and asparagine 258 are each glycosylated (N-linked (GlcNAc...) asparagine).

This sequence belongs to the tumor necrosis factor family. Homotrimer. Interacts with ARHGAP9, BAIAP2L1, BTK, CACNB3, CACNB4, CRK, DLG2, DNMBP, DOCK4, EPS8L3, FGR, FYB1, FYN, HCK, ITK, ITSN2, KALRN, LYN, MACC1, MIA, MPP4, MYO15A, NCF1, NCK1, NCK2, NCKIPSD, OSTF1, PIK3R1, PSTPIP1, RIMBP3C, SAMSN1, SH3GL3, SH3PXD2B, SH3PXD2A, SH3RF2, SKAP2, SNX33, SNX9, SORBS3, SPTA1, SRC, SRGAP1, SRGAP2, SRGAP3, TEC, TJP3 and YES1. The soluble form derives from the membrane form by proteolytic processing. The membrane-bound form undergoes two successive intramembrane proteolytic cleavages. The first one is processed by ADAM10 producing an N-terminal fragment, which lacks the receptor-binding extracellular domain. This ADAM10-processed FasL (FAsL APL) remnant form is still membrane anchored and further processed by SPPL2A that liberates the FasL intracellular domain (FasL ICD). FasL shedding by ADAM10 is a prerequisite for subsequent intramembrane cleavage by SPPL2A in T-cells. In terms of processing, phosphorylated by FGR on tyrosine residues; this is required for ubiquitination and subsequent internalization. Post-translationally, N-glycosylated. Glycosylation enhances apoptotic activity. Monoubiquitinated. In terms of tissue distribution, expressed in T-cells. Expressed in natural killer cells.

It localises to the cell membrane. The protein resides in the cytoplasmic vesicle lumen. The protein localises to the lysosome lumen. Its subcellular location is the secreted. It is found in the nucleus. In terms of biological role, cytokine that binds to TNFRSF6/FAS, a receptor that transduces the apoptotic signal into cells. Involved in cytotoxic T-cell-mediated apoptosis, natural killer cell-mediated apoptosis and in T-cell development. Initiates fratricidal/suicidal activation-induced cell death (AICD) in antigen-activated T-cells contributing to the termination of immune responses. TNFRSF6/FAS-mediated apoptosis also has a role in the induction of peripheral tolerance. Binds to TNFRSF6B/DcR3, a decoy receptor that blocks apoptosis. Functionally, induces FAS-mediated activation of NF-kappa-B, initiating non-apoptotic signaling pathways. Can induce apoptosis but does not appear to be essential for this process. Its function is as follows. Cytoplasmic form induces gene transcription inhibition. This is Tumor necrosis factor ligand superfamily member 6 (Faslg) from Mus musculus (Mouse).